A 408-amino-acid polypeptide reads, in one-letter code: Succinylornithine transaminase (408 aa).

An N6-(pyridoxal phosphate)lysine modification is found at Lys252.

It belongs to the class-III pyridoxal-phosphate-dependent aminotransferase family. AstC subfamily. The cofactor is pyridoxal 5'-phosphate.

It carries out the reaction N(2)-succinyl-L-ornithine + 2-oxoglutarate = N-succinyl-L-glutamate 5-semialdehyde + L-glutamate. The protein operates within amino-acid degradation; L-arginine degradation via AST pathway; L-glutamate and succinate from L-arginine: step 3/5. In terms of biological role, catalyzes the transamination of N(2)-succinylornithine and alpha-ketoglutarate into N(2)-succinylglutamate semialdehyde and glutamate. Can also act as an acetylornithine aminotransferase. This is Succinylornithine transaminase from Salmonella choleraesuis (strain SC-B67).